We begin with the raw amino-acid sequence, 385 residues long: Acetate kinase (385 aa).

Asn-9 is a binding site for Mg(2+). Lys-16 is an ATP binding site. Arg-87 is a substrate binding site. The active-site Proton donor/acceptor is Asp-144. ATP-binding positions include His-202–Gly-206 and Asp-277–Arg-279. Glu-373 lines the Mg(2+) pocket.

Belongs to the acetokinase family. In terms of assembly, homodimer. The cofactor is Mg(2+). Mn(2+) serves as cofactor.

The protein resides in the cytoplasm. The catalysed reaction is acetate + ATP = acetyl phosphate + ADP. It participates in metabolic intermediate biosynthesis; acetyl-CoA biosynthesis; acetyl-CoA from acetate: step 1/2. Its function is as follows. Catalyzes the formation of acetyl phosphate from acetate and ATP. Can also catalyze the reverse reaction. The protein is Acetate kinase of Rickettsia prowazekii (strain Madrid E).